A 404-amino-acid chain; its full sequence is uncharacterized protein (404 aa).

The next 2 membrane-spanning stretches (helical) occupy residues 35–55 and 92–112; these read ILFSNIKSILAIIWKYSFTFL and EDIWASTIILGVIIGYLISSI.

It is found in the membrane. This is an uncharacterized protein from Saccharomyces cerevisiae (strain ATCC 204508 / S288c) (Baker's yeast).